The following is a 547-amino-acid chain: Solute carrier family 22 member 7 (547 aa).

A helical transmembrane segment spans residues 21–41 (VALLALPRVLLPMHFLLPIFL). Positions 91-103 (NSTLWGEGQNSGE) are enriched in polar residues. The segment at 91-112 (NSTLWGEGQNSGEQPEGEPSTV) is disordered. 11 helical membrane-spanning segments follow: residues 145–165 (AIST…GYLS), 179–199 (VSSL…MFAI), 203–223 (LTGM…LEWL), 233–253 (VLSS…GYLI), 258–278 (WLLL…WWVP), 345–365 (ISLC…GVSL), 367–387 (LSGL…VELP), 403–423 (LTMA…ILVS), 431–451 (TALA…AYLF), 465–485 (MGLT…AALL), and 492–512 (LPKL…LLLP). The disordered stretch occupies residues 521–547 (ETIQDVERKSAPSSLQEEEMPMKQVQD).

Belongs to the major facilitator (TC 2.A.1) superfamily. Organic cation transporter (TC 2.A.1.19) family.

It localises to the basolateral cell membrane. Its subcellular location is the apical cell membrane. The protein localises to the cell membrane. It carries out the reaction orotate(out) + L-glutamate(in) = orotate(in) + L-glutamate(out). The enzyme catalyses 3',5'-cyclic GMP(in) = 3',5'-cyclic GMP(out). The catalysed reaction is GMP(in) = GMP(out). It catalyses the reaction 2'-deoxyguanosine(in) = 2'-deoxyguanosine(out). It carries out the reaction GDP(in) = GDP(out). The enzyme catalyses guanosine(in) = guanosine(out). The catalysed reaction is GTP(in) = GTP(out). It catalyses the reaction 3',5'-cyclic AMP(in) = 3',5'-cyclic AMP(out). It carries out the reaction creatinine(in) = creatinine(out). The enzyme catalyses prostaglandin E2(out) = prostaglandin E2(in). The catalysed reaction is 2-oxoglutarate(in) = 2-oxoglutarate(out). It catalyses the reaction glutarate(in) = glutarate(out). It carries out the reaction urate(out) = urate(in). The enzyme catalyses estrone 3-sulfate(out) = estrone 3-sulfate(in). In terms of biological role, functions as a Na(+)-independent bidirectional multispecific transporter. Contributes to the renal and hepatic elimination of endogenous organic compounds from the systemic circulation into the urine and bile, respectively. Capable of transporting a wide range of purine and pyrimidine nucleobases, nucleosides and nucleotides, with cGMP, 2'deoxyguanosine and GMP being the preferred substrates. Functions as a pH- and chloride-independent cGMP bidirectional facilitative transporter that can regulate both intracellular and extracellular levels of cGMP and may be involved in cGMP signaling pathways. Mediates orotate/glutamate bidirectional exchange and most likely display a physiological role in hepatic release of glutamate into the blood. Involved in renal secretion and possible reabsorption of creatinine. Able to uptake prostaglandin E2 (PGE2) and may contribute to PGE2 renal excretion. Also transports alpha-ketoglutarate and urate. Apart from the orotate/glutamate exchange, the counterions for the uptake of other SLC22A7/OAT2 substrates remain to be identified. In Bos taurus (Bovine), this protein is Solute carrier family 22 member 7 (SLC22A7).